Here is a 146-residue protein sequence, read N- to C-terminus: Hemoglobin subunit beta (146 aa).

One can recognise a Globin domain in the interval 2–146 (HWSAEEKQLI…VAHALARKYH (145 aa)). Residues histidine 63 and histidine 92 each contribute to the heme b site.

Belongs to the globin family. Heterotetramer of two alpha chains and two beta chains. As to expression, red blood cells.

Involved in oxygen transport from the lung to the various peripheral tissues. The protein is Hemoglobin subunit beta (HBB) of Anser indicus (Bar-headed goose).